Reading from the N-terminus, the 137-residue chain is Protein shisa-5 (137 aa).

The chain crosses the membrane as a helical span at residues 3–23; that stretch reads FGATLAVGLTIFVLSVVTIII.

It belongs to the shisa family. As to quaternary structure, interacts with PDCD6; PDCD6 can stabilize SHISA5.

The protein resides in the endoplasmic reticulum membrane. The protein localises to the nucleus membrane. In terms of biological role, can induce apoptosis in a caspase-dependent manner and plays a role in p53/TP53-dependent apoptosis. In Pongo abelii (Sumatran orangutan), this protein is Protein shisa-5 (SHISA5).